Consider the following 231-residue polypeptide: Thymidylate kinase (231 aa).

10–17 provides a ligand contact to ATP; it reads GGEGAGKT.

This sequence belongs to the thymidylate kinase family.

The catalysed reaction is dTMP + ATP = dTDP + ADP. Its function is as follows. Phosphorylation of dTMP to form dTDP in both de novo and salvage pathways of dTTP synthesis. This chain is Thymidylate kinase, found in Acaryochloris marina (strain MBIC 11017).